The sequence spans 103 residues: Small ribosomal subunit protein uS10 (103 aa).

The protein belongs to the universal ribosomal protein uS10 family. In terms of assembly, part of the 30S ribosomal subunit.

Its function is as follows. Involved in the binding of tRNA to the ribosomes. In Sphingopyxis alaskensis (strain DSM 13593 / LMG 18877 / RB2256) (Sphingomonas alaskensis), this protein is Small ribosomal subunit protein uS10.